Here is a 430-residue protein sequence, read N- to C-terminus: Adenylosuccinate synthetase (430 aa).

Residues 12–18 (GDEGKGK) and 40–42 (GHT) each bind GTP. Residue Asp-13 is the Proton acceptor of the active site. Mg(2+) is bound by residues Asp-13 and Gly-40. Residues 13–16 (DEGK), 38–41 (NAGH), Thr-128, Arg-142, Gln-223, Thr-238, and Arg-302 each bind IMP. His-41 (proton donor) is an active-site residue. Residue 298 to 304 (TTTGRPR) coordinates substrate. Residues Arg-304, 330–332 (SID), and 413–415 (SVG) each bind GTP.

It belongs to the adenylosuccinate synthetase family. Homodimer. The cofactor is Mg(2+).

It localises to the cytoplasm. The enzyme catalyses IMP + L-aspartate + GTP = N(6)-(1,2-dicarboxyethyl)-AMP + GDP + phosphate + 2 H(+). The protein operates within purine metabolism; AMP biosynthesis via de novo pathway; AMP from IMP: step 1/2. Its function is as follows. Plays an important role in the de novo pathway of purine nucleotide biosynthesis. Catalyzes the first committed step in the biosynthesis of AMP from IMP. This Lactococcus lactis subsp. cremoris (strain SK11) protein is Adenylosuccinate synthetase.